The following is a 425-amino-acid chain: Serine--tRNA ligase (425 aa).

Residue Thr230–Glu232 coordinates L-serine. Arg261 to Glu263 serves as a coordination point for ATP. Residue Glu284 participates in L-serine binding. Glu348 to Ser351 is an ATP binding site. Ser384 is an L-serine binding site.

This sequence belongs to the class-II aminoacyl-tRNA synthetase family. Type-1 seryl-tRNA synthetase subfamily. As to quaternary structure, homodimer. The tRNA molecule binds across the dimer.

The protein resides in the cytoplasm. It catalyses the reaction tRNA(Ser) + L-serine + ATP = L-seryl-tRNA(Ser) + AMP + diphosphate + H(+). It carries out the reaction tRNA(Sec) + L-serine + ATP = L-seryl-tRNA(Sec) + AMP + diphosphate + H(+). The protein operates within aminoacyl-tRNA biosynthesis; selenocysteinyl-tRNA(Sec) biosynthesis; L-seryl-tRNA(Sec) from L-serine and tRNA(Sec): step 1/1. Functionally, catalyzes the attachment of serine to tRNA(Ser). Is also able to aminoacylate tRNA(Sec) with serine, to form the misacylated tRNA L-seryl-tRNA(Sec), which will be further converted into selenocysteinyl-tRNA(Sec). This Streptococcus pyogenes serotype M3 (strain SSI-1) protein is Serine--tRNA ligase.